A 191-amino-acid chain; its full sequence is Hypoxanthine/guanine phosphoribosyltransferase (191 aa).

It belongs to the purine/pyrimidine phosphoribosyltransferase family. Archaeal HPRT subfamily. In terms of assembly, homodimer.

It is found in the cytoplasm. It carries out the reaction IMP + diphosphate = hypoxanthine + 5-phospho-alpha-D-ribose 1-diphosphate. The enzyme catalyses GMP + diphosphate = guanine + 5-phospho-alpha-D-ribose 1-diphosphate. The protein operates within purine metabolism; IMP biosynthesis via salvage pathway; IMP from hypoxanthine: step 1/1. Functionally, catalyzes a salvage reaction resulting in the formation of IMP that is energically less costly than de novo synthesis. The chain is Hypoxanthine/guanine phosphoribosyltransferase from Methanocella paludicola (strain DSM 17711 / JCM 13418 / NBRC 101707 / SANAE).